A 200-amino-acid polypeptide reads, in one-letter code: MQLNVNGAQAIEVSDRTFGGEFNETLVHQAVVAYMAGGRQGSKQQKTRSDVSGGGKRPWRQKGTGRARAGTTRGPIWRGGGVTFAARPQNHEQKLNKKMYRAALRSILAELVRSERLVVVEDFAVDAPKTKALASKLNGMGLSDVLIVSDAVDQNLYLAARNLPHVDVRDVQGSDPVSLIAYDKVLITVSAVKKFEELLG.

Positions 38 to 80 (GRQGSKQQKTRSDVSGGGKRPWRQKGTGRARAGTTRGPIWRGG) are disordered.

Belongs to the universal ribosomal protein uL4 family. As to quaternary structure, part of the 50S ribosomal subunit.

One of the primary rRNA binding proteins, this protein initially binds near the 5'-end of the 23S rRNA. It is important during the early stages of 50S assembly. It makes multiple contacts with different domains of the 23S rRNA in the assembled 50S subunit and ribosome. In terms of biological role, forms part of the polypeptide exit tunnel. This chain is Large ribosomal subunit protein uL4, found in Stutzerimonas stutzeri (strain A1501) (Pseudomonas stutzeri).